We begin with the raw amino-acid sequence, 505 residues long: Histidine ammonia-lyase (505 aa).

Residues 141 to 143 (ASG) constitute a cross-link (5-imidazolinone (Ala-Gly)). S142 carries the post-translational modification 2,3-didehydroalanine (Ser).

It belongs to the PAL/histidase family. Post-translationally, contains an active site 4-methylidene-imidazol-5-one (MIO), which is formed autocatalytically by cyclization and dehydration of residues Ala-Ser-Gly.

It localises to the cytoplasm. It carries out the reaction L-histidine = trans-urocanate + NH4(+). It participates in amino-acid degradation; L-histidine degradation into L-glutamate; N-formimidoyl-L-glutamate from L-histidine: step 1/3. This is Histidine ammonia-lyase from Bacillus cereus (strain AH187).